We begin with the raw amino-acid sequence, 186 residues long: Probable GPI-anchored cupredoxin ARB_05732-1 (186 aa).

Residues 1–18 (MVNMNILTTVALAGLAAA) form the signal peptide. Histidine 55 is a Cu cation binding site. A disulfide bridge connects residues cysteine 66 and cysteine 104. An N-linked (GlcNAc...) asparagine glycan is attached at asparagine 87. Residues cysteine 98 and histidine 103 each coordinate Cu cation. Positions 130 to 160 (GAGNGQAPSRVNNGSSGSGTPTSGGAPAATS) are disordered. Asparagine 142 carries N-linked (GlcNAc...) asparagine glycosylation. A compositionally biased stretch (low complexity) spans 143 to 160 (GSSGSGTPTSGGAPAATS). Residue glycine 153 is the site of GPI-anchor amidated glycine attachment. Residues 154-186 (GAPAATSPNAASSLTFSGAAALVAMGGAWIGLL) constitute a propeptide, removed in mature form.

The protein belongs to the multicopper oxidase family. Cu cation serves as cofactor.

The protein localises to the cell membrane. It is found in the secreted. Its function is as follows. Probable electron transfer copper protein that serves as a direct electron donor. The sequence is that of Probable GPI-anchored cupredoxin ARB_05732-1 from Arthroderma benhamiae (strain ATCC MYA-4681 / CBS 112371) (Trichophyton mentagrophytes).